The chain runs to 186 residues: MSRDLILLGVIGRPHGVRGLVHVVSYTADPDDLTAYGLLHDEAGRQIMLDWRADGLAGITIDGVPVQDRSAAERLTNTRLFINRDALPPVEDEDDFYLVDLIGLEARLVADETLLGQVAQVHDYGAGASLEITRSGGASLLVPFTRAAVPVVDIAAGRVLIDPPQEENAPEFGRNELGHDDGGEAA.

In terms of domain architecture, PRC barrel spans 93–168 (EDDFYLVDLI…VLIDPPQEEN (76 aa)). The disordered stretch occupies residues 163–186 (PPQEENAPEFGRNELGHDDGGEAA). The segment covering 173–186 (GRNELGHDDGGEAA) has biased composition (basic and acidic residues).

It belongs to the RimM family. In terms of assembly, binds ribosomal protein uS19.

The protein resides in the cytoplasm. In terms of biological role, an accessory protein needed during the final step in the assembly of 30S ribosomal subunit, possibly for assembly of the head region. Essential for efficient processing of 16S rRNA. May be needed both before and after RbfA during the maturation of 16S rRNA. It has affinity for free ribosomal 30S subunits but not for 70S ribosomes. The sequence is that of Ribosome maturation factor RimM from Granulibacter bethesdensis (strain ATCC BAA-1260 / CGDNIH1).